We begin with the raw amino-acid sequence, 898 residues long: Netrin receptor UNC5A (898 aa).

The first 25 residues, 1–25, serve as a signal peptide directing secretion; the sequence is MAVRPGLWPALLGIVLTAWLRGSGA. At 26–361 the chain is on the extracellular side; the sequence is QQSATVANPV…TSSGPEDVAL (336 aa). One can recognise an Ig-like domain in the interval 44–141; sequence PHFLVEPEDV…SGTTKSQKAY (98 aa). 3 disulfides stabilise this stretch: C65–C126, C77–C124, and C170–C221. N-linked (GlcNAc...) asparagine glycans are attached at residues N107 and N218. In terms of domain architecture, Ig-like C2-type spans 155 to 234; that stretch reads PLAKEVSLEQ…NIVARRRSAS (80 aa). TSP type-1 domains are found at residues 242–296 and 298–350; these read NGGW…TLCP and DGSW…DLCL. C-linked (Man) tryptophan glycans are attached at residues W245, W248, and W251. Intrachain disulfides connect C254–C291, C258–C295, and C269–C281. C-linked (Man) tryptophan glycans are attached at residues W301 and W304. 3 cysteine pairs are disulfide-bonded: C310/C344, C314/C349, and C322/C334. N-linked (GlcNAc...) asparagine glycosylation occurs at N343. Residues 362 to 382 form a helical membrane-spanning segment; that stretch reads YIGLVAVAVCLILLLLVLVLI. Over 383–898 the chain is Cytoplasmic; it reads YCRKKEGLDS…GLFTVSEAEC (516 aa). One can recognise a ZU5 domain in the interval 497–640; sequence NMAYGTFNFL…LGRFALVGEA (144 aa). The interaction with DCC stretch occupies residues 661–679; the sequence is SLEYNIRVYCLHDTHDALK. The 81-residue stretch at 817–897 folds into the Death domain; it reads QKIITSLDPP…AGLFTVSEAE (81 aa).

It belongs to the unc-5 family. As to quaternary structure, homodimer and homooligomer. Interacts with the cytoplasmic part of DCC. Interacts with MAGED1. Interacts with PRKCABP, possibly mediating some interaction with PKC. Interacts (via extracellular domain) with FLRT2 (via extracellular domain). Interacts (via extracellular domain) with FLRT3 (via extracellular domain). Post-translationally, phosphorylated on cytoplasmic tyrosine residues. Phosphorylated by PKC in vitro. In terms of processing, proteolytically cleaved by caspases during apoptosis. The cleavage does not take place when the receptor is associated with netrin ligand. Its cleavage by caspases is required to induce apoptosis. The two extracellular TSRs of UNC5A contain WxxWxxWxxC motifs that can be C-mannosylated on all tryptophans. DPY19L1 preferentially mannosylates the first two tryptophans and DPY19L3 prefers the third. C-mannosylation by DPY19L1 is required for transport of UNC5A from the endoplasmic reticulum to the cell surface. In terms of tissue distribution, restricted to central nervous system.

The protein resides in the cell membrane. It is found in the membrane raft. It localises to the cell projection. Its subcellular location is the neuron projection. Its function is as follows. Receptor for netrin required for axon guidance. Functions in the netrin signaling pathway and promotes neurite outgrowth in response to NTN1. Mediates axon repulsion of neuronal growth cones in the developing nervous system in response to netrin. Axon repulsion in growth cones may be mediated by its association with DCC that may trigger signaling for repulsion. It also acts as a dependence receptor required for apoptosis induction when not associated with netrin ligand. This is Netrin receptor UNC5A (Unc5a) from Mus musculus (Mouse).